The chain runs to 480 residues: MPTMGGLHQGHGELIRRASEQGPVLVSVFVNPLQFGPAEDFDRYPRTLEADRGLAECCGAHALWAPSVDAIYPSGLPSAVSRSAPAGLQTHLCGASRPGHFDGVVTVVARLLQLVEPSCLWLGEKDWQQLVILRRLVVDLDLGVVVKGVPTVRESDGLALSSRNQYLFPADRARAAALPAALRHADPSDPESSVRQSLAKAGLEVEYVERVDPRTLQPCGPETAISLLAAAVRCGTTRLIDHVFLMTRQPLVAIDGPAGAGKSTVTRAFAERMGLVYLDTGAMYRSVTWLVQQNGVDHQDAVSIAPLLNDLDLQLKSLPGGGQQVLVNGQDVSDAIRSPEVTASVSAVAAHRCVRQALTAQQKAMGAKGGLVAEGRDIGTAVFPDADLKVFLTATVGERARRRALDLEQRGFPVPERSELEAQIAERDHLDSTREEAPLVQADDALELVTDGMSIEAVIDALVGQFRSRVGEEAWPTPAG.

The interval 1–243 is pantoate--beta-alanine ligase; the sequence is MPTMGGLHQG…CGTTRLIDHV (243 aa). 4 to 11 contributes to the ATP binding site; that stretch reads MGGLHQGH. His11 serves as the catalytic Proton donor. Gln34 lines the (R)-pantoate pocket. Gln34 is a binding site for beta-alanine. Position 123–126 (123–126) interacts with ATP; the sequence is GEKD. (R)-pantoate is bound at residue Gln129. Residues Val152 and 160–163 contribute to the ATP site; that span reads LSSR. Residues 244-480 form a cytidylate kinase region; that stretch reads FLMTRQPLVA…GEEAWPTPAG (237 aa).

It in the N-terminal section; belongs to the pantothenate synthetase family. The protein in the C-terminal section; belongs to the cytidylate kinase family. Type 1 subfamily.

The protein localises to the cytoplasm. It carries out the reaction (R)-pantoate + beta-alanine + ATP = (R)-pantothenate + AMP + diphosphate + H(+). It catalyses the reaction CMP + ATP = CDP + ADP. The enzyme catalyses dCMP + ATP = dCDP + ADP. It functions in the pathway cofactor biosynthesis; (R)-pantothenate biosynthesis; (R)-pantothenate from (R)-pantoate and beta-alanine: step 1/1. In terms of biological role, catalyzes the condensation of pantoate with beta-alanine in an ATP-dependent reaction via a pantoyl-adenylate intermediate. Functionally, catalyzes the transfer of a phosphate group from ATP to either CMP or dCMP to form CDP or dCDP and ADP, respectively. This Synechococcus sp. (strain CC9605) protein is Bifunctional pantoate ligase/cytidylate kinase.